The chain runs to 223 residues: UPF0502 protein Sbal223_2520 (223 aa).

Belongs to the UPF0502 family.

In Shewanella baltica (strain OS223), this protein is UPF0502 protein Sbal223_2520.